The chain runs to 151 residues: MLP-like protein 329 (151 aa).

Belongs to the MLP family.

This chain is MLP-like protein 329 (MLP329), found in Arabidopsis thaliana (Mouse-ear cress).